Reading from the N-terminus, the 299-residue chain is ATP phosphoribosyltransferase (299 aa).

The protein belongs to the ATP phosphoribosyltransferase family. Long subfamily. It depends on Mg(2+) as a cofactor.

The protein localises to the cytoplasm. The enzyme catalyses 1-(5-phospho-beta-D-ribosyl)-ATP + diphosphate = 5-phospho-alpha-D-ribose 1-diphosphate + ATP. It participates in amino-acid biosynthesis; L-histidine biosynthesis; L-histidine from 5-phospho-alpha-D-ribose 1-diphosphate: step 1/9. Its activity is regulated as follows. Feedback inhibited by histidine. Functionally, catalyzes the condensation of ATP and 5-phosphoribose 1-diphosphate to form N'-(5'-phosphoribosyl)-ATP (PR-ATP). Has a crucial role in the pathway because the rate of histidine biosynthesis seems to be controlled primarily by regulation of HisG enzymatic activity. This chain is ATP phosphoribosyltransferase, found in Shewanella baltica (strain OS155 / ATCC BAA-1091).